The sequence spans 335 residues: Type 1 fimbrin D-mannose specific adhesin (335 aa).

The N-terminal stretch at 1-22 (MKIYSALLLAGTALFFTHPALA) is a signal peptide.

The protein belongs to the fimbrial protein family.

Its subcellular location is the fimbrium. Involved in regulation of length and mediation of adhesion of type 1 fimbriae (but not necessary for the production of fimbriae). A mannose-binding adhesin. The polypeptide is Type 1 fimbrin D-mannose specific adhesin (fimH) (Salmonella typhimurium (strain LT2 / SGSC1412 / ATCC 700720)).